We begin with the raw amino-acid sequence, 358 residues long: MKQIQVDLGVRSYPIVIGRNLMSCGEHFARFLQDKKILIVTNETVAPLYLEKLELQLSSFDCVEPVILPDGEQYKTLAQMDSIFTSLLQQNSGRDTVLIALGGGVIGDMTGFAAASYQRGIDFIQIPTTLLAQVDSSVGGKTAVNHPLGKNMIGAFYQPKLVVIDTDCLSTLPAKEFSAGMAEVIKYGIIWDSEFFSWLENNVERLKTLDDEALAYAIGRCCEIKADVVAEDETEQGVRALLNLGHTFGHAIEAEMGYGVWLHGEAVAAGTVLAASTASRMGLIDGSIVCRITKLFEAFDLPVSPPDSMNFEQFIKHMRRDKKVLKGQVRLVLPEAMGQAGVYSEVSDELLEDVIRCA.

NAD(+) is bound by residues 70–75 (DGEQYK), 104–108 (GVIGD), 128–129 (TT), K141, K150, and 168–171 (CLST). Zn(2+) is bound by residues E183, H246, and H263.

Belongs to the sugar phosphate cyclases superfamily. Dehydroquinate synthase family. It depends on Co(2+) as a cofactor. Zn(2+) is required as a cofactor. Requires NAD(+) as cofactor.

It is found in the cytoplasm. It carries out the reaction 7-phospho-2-dehydro-3-deoxy-D-arabino-heptonate = 3-dehydroquinate + phosphate. The protein operates within metabolic intermediate biosynthesis; chorismate biosynthesis; chorismate from D-erythrose 4-phosphate and phosphoenolpyruvate: step 2/7. Functionally, catalyzes the conversion of 3-deoxy-D-arabino-heptulosonate 7-phosphate (DAHP) to dehydroquinate (DHQ). In Shewanella woodyi (strain ATCC 51908 / MS32), this protein is 3-dehydroquinate synthase.